Reading from the N-terminus, the 511-residue chain is Synaptotagmin-6 (511 aa).

At 1–59 (MSGVWGAGGPRCQAALAVLASLCRARPPPLGLDVETCQSFELQPPEQSPSAADSGTSVS) the chain is on the vesicular side. Positions 12–38 (CQAALAVLASLCRARPPPLGLDVETCQ) are cysteine motif. Residues 60–80 (LLAVVVIVCGVALVAVFFFLF) form a helical membrane-spanning segment. Over 81–511 (WKLCWMPWRN…KSFKEGTPRL (431 aa)) the chain is Cytoplasmic. Over residues 93–103 (ASSPSSANPAS) the composition is skewed to low complexity. Disordered regions lie at residues 93–118 (ASSP…MADK) and 157–182 (TKLQ…LPRQ). Over residues 160-172 (QRQTTEPASSTRH) the composition is skewed to polar residues. Serine 217 carries the phosphoserine modification. C2 domains are found at residues 230–351 (SCGK…SIWK) and 362–495 (DLGE…AHWH). Ca(2+)-binding residues include aspartate 261, aspartate 267, aspartate 319, phenylalanine 320, aspartate 321, serine 324, aspartate 327, aspartate 393, aspartate 399, aspartate 453, and aspartate 455. The tract at residues 483-511 (MLAYPRKPIAHWHCLAEVKKSFKEGTPRL) is necessary for cell membrane association (isoform 2).

The protein belongs to the synaptotagmin family. Isoform 1: Homodimer; disulfide-linked via the cysteine motif. Isoform 1: Can also form heterodimers with SYT3, SYT7, SYT9 and SYT10. Isoform 1: Interacts with STX1A, STX1B and STX2; the interaction is Ca(2+)-dependent. Isoform 2: Is not able to form homodimer and heterodimers. Requires Ca(2+) as cofactor.

It is found in the cytoplasmic vesicle. It localises to the secretory vesicle. The protein resides in the synaptic vesicle membrane. Its subcellular location is the membrane. The protein localises to the cytoplasm. It is found in the cytosol. It localises to the cell membrane. May be involved in Ca(2+)-dependent exocytosis of secretory vesicles through Ca(2+) and phospholipid binding to the C2 domain or may serve as Ca(2+) sensors in the process of vesicular trafficking and exocytosis. May mediate Ca(2+)-regulation of exocytosis in acrosomal reaction in sperm. The polypeptide is Synaptotagmin-6 (Syt6) (Rattus norvegicus (Rat)).